Here is a 630-residue protein sequence, read N- to C-terminus: Plastin-1 (630 aa).

Methionine 1 carries the post-translational modification N-acetylmethionine. EF-hand domains follow at residues 11 to 46 (EELEELQEAFNKIDIDNSGYVSDYELQDLFKEASLP) and 51 to 86 (KVREIVEKILVVADNNKDGKISFEEFVSLMQELKSK). The Ca(2+) site is built by aspartate 24, aspartate 26, serine 28, tyrosine 30, glutamate 35, aspartate 64, asparagine 66, aspartate 68, lysine 70, and glutamate 75. Actin-binding regions lie at residues 108-381 (TSSI…CLHK) and 382-626 (PDNN…GKGL). 4 consecutive Calponin-homology (CH) domains span residues 122 to 238 (EEEK…KVGL), 266 to 377 (LSPE…NTYP), 396 to 505 (SKEE…RRYT), and 517 to 626 (KVTD…GKGL).

In terms of assembly, monomer. Phosphorylated. In terms of tissue distribution, in the inner ear, it is expressed in the organ of Corti. Abundant in the utricle (at protein level).

It localises to the cytoplasm. The protein localises to the cell projection. The protein resides in the stereocilium. Its function is as follows. Actin-bundling protein. In the inner ear, it is required for stereocilia formation. Mediates liquid packing of actin filaments that is necessary for stereocilia to grow to their proper dimensions. The protein is Plastin-1 (Pls1) of Mus musculus (Mouse).